A 590-amino-acid polypeptide reads, in one-letter code: V-type ATP synthase alpha chain (590 aa).

232-239 is an ATP binding site; that stretch reads GPFGSGKT.

The protein belongs to the ATPase alpha/beta chains family.

It carries out the reaction ATP + H2O + 4 H(+)(in) = ADP + phosphate + 5 H(+)(out). Produces ATP from ADP in the presence of a proton gradient across the membrane. The V-type alpha chain is a catalytic subunit. This Thermoanaerobacter pseudethanolicus (strain ATCC 33223 / 39E) (Clostridium thermohydrosulfuricum) protein is V-type ATP synthase alpha chain.